Consider the following 206-residue polypeptide: ATP phosphoribosyltransferase (206 aa).

This sequence belongs to the ATP phosphoribosyltransferase family. Short subfamily. In terms of assembly, heteromultimer composed of HisG and HisZ subunits.

The protein resides in the cytoplasm. It catalyses the reaction 1-(5-phospho-beta-D-ribosyl)-ATP + diphosphate = 5-phospho-alpha-D-ribose 1-diphosphate + ATP. Its pathway is amino-acid biosynthesis; L-histidine biosynthesis; L-histidine from 5-phospho-alpha-D-ribose 1-diphosphate: step 1/9. Catalyzes the condensation of ATP and 5-phosphoribose 1-diphosphate to form N'-(5'-phosphoribosyl)-ATP (PR-ATP). Has a crucial role in the pathway because the rate of histidine biosynthesis seems to be controlled primarily by regulation of HisG enzymatic activity. The sequence is that of ATP phosphoribosyltransferase from Campylobacter curvus (strain 525.92).